The primary structure comprises 362 residues: UDP-N-acetylglucosamine--N-acetylmuramyl-(pentapeptide) pyrophosphoryl-undecaprenol N-acetylglucosamine transferase (362 aa).

Residues 15 to 17 (TGG), Asn-127, Arg-165, Ser-191, Ile-247, 266 to 271 (ALTVSE), and Gln-292 contribute to the UDP-N-acetyl-alpha-D-glucosamine site.

Belongs to the glycosyltransferase 28 family. MurG subfamily.

The protein localises to the cell inner membrane. The catalysed reaction is di-trans,octa-cis-undecaprenyl diphospho-N-acetyl-alpha-D-muramoyl-L-alanyl-D-glutamyl-meso-2,6-diaminopimeloyl-D-alanyl-D-alanine + UDP-N-acetyl-alpha-D-glucosamine = di-trans,octa-cis-undecaprenyl diphospho-[N-acetyl-alpha-D-glucosaminyl-(1-&gt;4)]-N-acetyl-alpha-D-muramoyl-L-alanyl-D-glutamyl-meso-2,6-diaminopimeloyl-D-alanyl-D-alanine + UDP + H(+). It functions in the pathway cell wall biogenesis; peptidoglycan biosynthesis. Cell wall formation. Catalyzes the transfer of a GlcNAc subunit on undecaprenyl-pyrophosphoryl-MurNAc-pentapeptide (lipid intermediate I) to form undecaprenyl-pyrophosphoryl-MurNAc-(pentapeptide)GlcNAc (lipid intermediate II). The protein is UDP-N-acetylglucosamine--N-acetylmuramyl-(pentapeptide) pyrophosphoryl-undecaprenol N-acetylglucosamine transferase of Shewanella baltica (strain OS185).